The following is a 156-amino-acid chain: Arginine repressor (156 aa).

Belongs to the ArgR family.

It is found in the cytoplasm. Its pathway is amino-acid biosynthesis; L-arginine biosynthesis [regulation]. In terms of biological role, regulates arginine biosynthesis genes. The chain is Arginine repressor from Shewanella sp. (strain ANA-3).